Here is a 149-residue protein sequence, read N- to C-terminus: Transcriptional repressor NrdR (149 aa).

A zinc finger lies at 3 to 34; it reads CPFCAAVDTKVIDSRLVSDGSQVRRRRQCLDC. Residues 49 to 139 enclose the ATP-cone domain; it reads PRVIKSDEVR…VYRSFEDVRE (91 aa).

Belongs to the NrdR family. It depends on Zn(2+) as a cofactor.

In terms of biological role, negatively regulates transcription of bacterial ribonucleotide reductase nrd genes and operons by binding to NrdR-boxes. The chain is Transcriptional repressor NrdR from Yersinia pseudotuberculosis serotype O:1b (strain IP 31758).